Consider the following 118-residue polypeptide: Small ribosomal subunit protein uS13 (118 aa).

Positions 94-118 are disordered; sequence GLPVRGQRTKTNARTRKGPRKPIKK.

It belongs to the universal ribosomal protein uS13 family. In terms of assembly, part of the 30S ribosomal subunit. Forms a loose heterodimer with protein S19. Forms two bridges to the 50S subunit in the 70S ribosome.

In terms of biological role, located at the top of the head of the 30S subunit, it contacts several helices of the 16S rRNA. In the 70S ribosome it contacts the 23S rRNA (bridge B1a) and protein L5 of the 50S subunit (bridge B1b), connecting the 2 subunits; these bridges are implicated in subunit movement. Contacts the tRNAs in the A and P-sites. The protein is Small ribosomal subunit protein uS13 of Shigella dysenteriae serotype 1 (strain Sd197).